The primary structure comprises 76 residues: Small ribosomal subunit protein bS18 (76 aa).

It belongs to the bacterial ribosomal protein bS18 family. As to quaternary structure, part of the 30S ribosomal subunit. Forms a tight heterodimer with protein bS6.

Binds as a heterodimer with protein bS6 to the central domain of the 16S rRNA, where it helps stabilize the platform of the 30S subunit. The sequence is that of Small ribosomal subunit protein bS18 from Xanthomonas euvesicatoria pv. vesicatoria (strain 85-10) (Xanthomonas campestris pv. vesicatoria).